The sequence spans 190 residues: Cytoglobin (190 aa).

The disordered stretch occupies residues 1 to 21 (MEKVPGDMEIERRERNEELSE). In terms of domain architecture, Globin spans 18-167 (ELSEAERKAV…IYSHVTAAYK (150 aa)). Residues Cys-38 and Cys-83 are joined by a disulfide bond. 2 residues coordinate heme b: His-81 and His-113.

The protein belongs to the globin family. In terms of assembly, monomeric. Homodimer; disulfide-linked in vitro. Also homooligomeric in vitro. Post-translationally, the formation of an intramolecular disulfide bond between cysteines Cys-38 and Cys-83 specifically enhances the nitrite reductase activity. In terms of tissue distribution, widely expressed (at protein level).

It localises to the cytoplasm. Its subcellular location is the nucleus. The catalysed reaction is Fe(II)-heme b-[protein] + nitric oxide + O2 = Fe(III)-heme b-[protein] + nitrate. It catalyses the reaction Fe(III)-heme b-[protein] + nitric oxide + H2O = Fe(II)-heme b-[protein] + nitrite + 2 H(+). It carries out the reaction 2 superoxide + 2 H(+) = H2O2 + O2. The enzyme catalyses H2O2 + AH2 = A + 2 H2O. Its activity is regulated as follows. The nitric oxide dioxygenase activity is activated by a reducing system composed of cytochrome b5, its upstream reductase CYB5R3 and NADH. Its function is as follows. Probable multifunctional globin with a hexacoordinated heme iron required for the catalysis of various reactions depending on redox condition of the cell as well as oxygen availability. Has a nitric oxide dioxygenase (NOD) activity and is most probably involved in cell-mediated and oxygen-dependent nitric oxide consumption. By scavenging this second messenger may regulate several biological processes including endothelium-mediated vasodilation and vascular tone. Under normoxic conditions functions as a nitric oxide dioxygenase (NOD) but under hypoxic conditions the globin may switch its function to that of a nitrite (NO2) reductase (NiR), generating nitric oxide. Could also have peroxidase and superoxide dismutase activities, detoxifying reactive oxygen species and protecting cells against oxidative stress. Also binds dioxygen with low affinity and could function as an oxygen sensor but has probably no function as a respiratory oxygen carrier. In Rattus norvegicus (Rat), this protein is Cytoglobin.